The following is a 273-amino-acid chain: MTDSLIRIAVAGSGGRMGRQLIQAVQQAPGVVLGAAISRPGSSLIGTDAGELAGVGALGVTVSDSLEKVVDDFDILIDFTRPESTLAYLAFCVEHKKAMVIGTTGFDDAGKDAIRAAGQQIGIVFAANFSVGVNLVLKLLEKAAQVMGDYTDIEIIEAHHRHKVDAPSGTALAMGEAIAGALGRDLKECAVYAREGYTGERDPKSIGFATVRAGDIVGEHTAMFADIGERVEITHKASSRMTFASGAVRAASWLHNHDKGLFDMRDVLNLDQL.

12–17 (GSGGRM) is an NAD(+) binding site. R39 contributes to the NADP(+) binding site. NAD(+) is bound by residues 102–104 (GTT) and 126–129 (AANF). The Proton donor/acceptor role is filled by H159. H160 is a binding site for (S)-2,3,4,5-tetrahydrodipicolinate. Residue K163 is the Proton donor of the active site. 169–170 (GT) lines the (S)-2,3,4,5-tetrahydrodipicolinate pocket.

Belongs to the DapB family. Homotetramer.

The protein localises to the cytoplasm. The enzyme catalyses (S)-2,3,4,5-tetrahydrodipicolinate + NAD(+) + H2O = (2S,4S)-4-hydroxy-2,3,4,5-tetrahydrodipicolinate + NADH + H(+). It catalyses the reaction (S)-2,3,4,5-tetrahydrodipicolinate + NADP(+) + H2O = (2S,4S)-4-hydroxy-2,3,4,5-tetrahydrodipicolinate + NADPH + H(+). It functions in the pathway amino-acid biosynthesis; L-lysine biosynthesis via DAP pathway; (S)-tetrahydrodipicolinate from L-aspartate: step 4/4. Functionally, catalyzes the conversion of 4-hydroxy-tetrahydrodipicolinate (HTPA) to tetrahydrodipicolinate. The polypeptide is 4-hydroxy-tetrahydrodipicolinate reductase (Serratia proteamaculans (strain 568)).